A 319-amino-acid chain; its full sequence is Acetyl-coenzyme A carboxylase carboxyl transferase subunit alpha (319 aa).

The CoA carboxyltransferase C-terminal domain maps to 35–296 (NIDEEVHRLR…KAQLLEDLAD (262 aa)).

This sequence belongs to the AccA family. In terms of assembly, acetyl-CoA carboxylase is a heterohexamer composed of biotin carboxyl carrier protein (AccB), biotin carboxylase (AccC) and two subunits each of ACCase subunit alpha (AccA) and ACCase subunit beta (AccD).

It is found in the cytoplasm. The enzyme catalyses N(6)-carboxybiotinyl-L-lysyl-[protein] + acetyl-CoA = N(6)-biotinyl-L-lysyl-[protein] + malonyl-CoA. It participates in lipid metabolism; malonyl-CoA biosynthesis; malonyl-CoA from acetyl-CoA: step 1/1. Functionally, component of the acetyl coenzyme A carboxylase (ACC) complex. First, biotin carboxylase catalyzes the carboxylation of biotin on its carrier protein (BCCP) and then the CO(2) group is transferred by the carboxyltransferase to acetyl-CoA to form malonyl-CoA. The polypeptide is Acetyl-coenzyme A carboxylase carboxyl transferase subunit alpha (Salmonella arizonae (strain ATCC BAA-731 / CDC346-86 / RSK2980)).